Here is a 635-residue protein sequence, read N- to C-terminus: MRFRRRRFGRRRRYYRKRRGGWRRRFRIRRRRPWRRWRVRRWRRSVFRRRGRRARPYRISAWNPKVLRNCRITGWWPVIQCMDGMEWIKYKPMDLRVEANRIFDKQGSKIETEQMGYLMQYGGGWSSGVISLEGLFNENRLWRNIWSKSNDGMDLVRYFGCRIRLYPTENQGYLFWYDTEFDEQQRRMLDEYTQPSVMLQAKNSRLIVCKQKMPIRRRVKSIFIPPPAQLTTQWKFQQELCQFPLFNWACICIDMDTPFDYNGAWRNAWWLMRRLQNGNMEYIERWGRIPMTGDTELPPADDFKAGGVNKNFKPTGIQRIYPIVAVCLVEGNKRVVKWATVHNGPIDRWRKKQTGTLKLSALRRLVLRVCSESETYYKWTASEFTGAFQQDWWPVSGTEYPLCTIKMEPEFENPTVEVWSWKATIPTAGTLKDYFGLSSGQQWKDTDFGRLQLPRSSHNVDFGHKARFGPFCVKKPPVEFRDSAPNPLNIWVKYTFYFQFGGMYQPPTGIQDPCTSNPTYPVRMVGAVTHPKYAGQGGIATQIGDQGITAASLRAISAAPPNTYTQSAFLKAPETEKEEERESETSFTSAESSSEGDGSSDDQAERRAARKRVIKLLLKRLADRPVDNKRRRFSE.

The tract at residues 571–608 is disordered; it reads KAPETEKEEERESETSFTSAESSSEGDGSSDDQAERRA. Residues 573–584 are compositionally biased toward basic and acidic residues; that stretch reads PETEKEEERESE. Over residues 585–597 the composition is skewed to low complexity; that stretch reads TSFTSAESSSEGD.

It belongs to the anelloviridae capsid protein family.

The protein resides in the virion. Functionally, self-assembles to form an icosahedral capsid with a T=1 symmetry, about 30 nm in diameter, and consisting of 60 capsid proteins. The capsid encapsulates the genomic DNA. Capsid protein is involved in attachment and entry into the host cell. This is Capsid protein from Torque teno sus virus 1 (isolate Sd-TTV31).